A 1226-amino-acid polypeptide reads, in one-letter code: Chromosome partition protein Smc (1226 aa).

32–39 (PNGCGKSN) contributes to the ATP binding site. Coiled coils occupy residues 173–231 (ITKF…IKRN) and 269–491 (NSLE…SKSL). Positions 527-635 (YQLLGNLIQC…FDGYFIASKF (109 aa)) constitute an SMC hinge domain. 3 coiled-coil regions span residues 679 to 741 (QGVV…AAKK), 775 to 965 (MLES…LREA), and 1006 to 1078 (HRRY…KSKE).

The protein belongs to the SMC family. In terms of assembly, homodimer.

The protein localises to the cytoplasm. Required for chromosome condensation and partitioning. The sequence is that of Chromosome partition protein Smc from Halobacteriovorax marinus (strain ATCC BAA-682 / DSM 15412 / SJ) (Bacteriovorax marinus).